The following is a 336-amino-acid chain: MSTKKHNLLANFASSDSRFTQQELPACKPILTPKWVILTFLVSGVVFIPLGVICLFASQGVIEIVDRYDTDCIPLSSRDNKVRYIQGLEDKRCNRTITVTKTMKNPVYVYYQLENYYQNHRRYVKSRQDGQLRSPKDEHETKSCAPEDTLGGQPIVPCGLVAWSLFNDTYDFTRNNQKLPVNKKDISWKSDRESKFGKNVFPKNFQKGSLIGGKSLDQDIPLSEQEDLIVWMRTAALPTFRKLYGKIDTDLQAGDTIKVLLQNNYNTYSFNGKKKLVLSTTSWLGGRNDFLGIAYLTVGSICLFLAVSFSVLYLAKPRQLGDPSYLSWNRSAGGGR.

A helical transmembrane segment spans residues 36–56 (VILTFLVSGVVFIPLGVICLF). An N-linked (GlcNAc...) asparagine glycan is attached at asparagine 94. The span at 127-142 (RQDGQLRSPKDEHETK) shows a compositional bias: basic and acidic residues. Residues 127 to 148 (RQDGQLRSPKDEHETKSCAPED) form a disordered region. Asparagine 167 carries N-linked (GlcNAc...) asparagine glycosylation. The chain crosses the membrane as a helical span at residues 290–310 (FLGIAYLTVGSICLFLAVSFS). Asparagine 329 carries an N-linked (GlcNAc...) asparagine glycan.

Belongs to the CDC50/LEM3 family. In terms of tissue distribution, expressed in flowers. May be restricted to pollen grains.

It localises to the membrane. The protein is Putative ALA-interacting subunit 4 (ALIS4) of Arabidopsis thaliana (Mouse-ear cress).